A 973-amino-acid chain; its full sequence is MAAVMAAPEAVEAPSSLLLLVVGGECGCPGLLAYVMEELERGVRSWEDVDPAVCSLDEQLKAFVSRHSATFSSIVKGQRSLHHRGETLETLVLLNPSDKSLCDELRNLLMDPAPHKLLVLAGPCLEETGELLLQTGGFSAHHFLQVLGDKEVQDALASAPAAPALTVSCPTFGDWALLGPVPGLQLRLNPPAQLPASEGLRAFLEYVAESLEPPSPFELLEPPAAGGFLRLARPCCYVFPGGLGDAAFFAVNGFTVLVNGGSNPKSSFWKLVRHLDRVDAVLVTHAGADSLPGLNSLLRRKLAEREAAAGPQGQHEERLRRLLSPALGVVFLNAREAASRLRGGEDEAVCARSLLRSLGIAPLPLQRGPQPSCPTVLFEKLGVGRLELFVLHPPPGDPAAPACALLVWQPAAPGDKVVRVLFPGRTPPARLLDGLQRLQHLPCLRRPVVTTHDLEAPSRANSQDSLASRDSARKEPVRGTVGSIANRSTVRREPALATRDQKKDTRSGPTQPTARDTRRSGPGVVNTKPRVSQNGPRAPVLAAPLTAPVAECPGEAENILESERPPAPSPTLSPAQSPPPTAPGNSPERLSLSPLRPEPAPDASPSATTPTLTTPSLPAELGSPHSTEVDESLSVSFEQVLPAGDPGLSLPLRLARRSTSPHDVDLCLVSPCEFSHRKPPPPASPGSSDSSARSQERPPETPPTSVSESLPTLSDSDPVPVADSDDDAGSESAARDPPPTPRVPPPLPDVPGICMVDPEALPPRARQPLNTTNPSRSRKAPARPSSASATPRAATVAAKTKGPAGDRNRPLSARSEPADRPGRVPLTRKPSVPKTVPKMASATRLSSGPSGRPAPLAAGSPVYLDLAYLPGGGAGHLDQNFFLRVRALCYVISGQGQRQEEGLRAVLDALLAGKRQWDLDLQVTLIPTFDSAVMHRWYEETHAQHQALGIRVLGSGSLVSMQDEAFPACKVEF.

Positions 1 to 716 are necessary for the microtubule-organizing center localization; the sequence is MAAVMAAPEA…SESLPTLSDS (716 aa). Disordered regions lie at residues 452-538 and 560-853; these read HDLE…GPRA and LESE…SGRP. A compositionally biased stretch (polar residues) spans 459-468; that stretch reads RANSQDSLAS. Ser-462 is modified (phosphoserine). A compositionally biased stretch (basic and acidic residues) spans 490-506; the sequence is VRREPALATRDQKKDTR. Residues 565 to 582 show a composition bias toward pro residues; sequence PPAPSPTLSPAQSPPPTA. Phosphoserine is present on residues Ser-586, Ser-591, and Ser-593. Positions 601-973 are necessary for interaction with RASSF1; the sequence is PDASPSATTP…EAFPACKVEF (373 aa). A compositionally biased stretch (low complexity) spans 603-621; the sequence is ASPSATTPTLTTPSLPAEL. The tract at residues 645 to 880 is necessary for association with microtubules; the sequence is DPGLSLPLRL…GGGAGHLDQN (236 aa). Ser-660 and Ser-684 each carry phosphoserine. A compositionally biased stretch (low complexity) spans 703–722; the sequence is PTSVSESLPTLSDSDPVPVA. Position 724 is a phosphoserine (Ser-724). A compositionally biased stretch (pro residues) spans 736 to 749; that stretch reads DPPPTPRVPPPLPD. A compositionally biased stretch (low complexity) spans 782 to 801; that stretch reads ARPSSASATPRAATVAAKTK. Positions 875-973 are necessary for association with actin; that stretch reads GHLDQNFFLR…EAFPACKVEF (99 aa). The interval 881–905 is necessary for the mitochondrial aggregation and genome destruction; sequence FFLRVRALCYVISGQGQRQEEGLRA.

This sequence belongs to the MAP1 family. As to quaternary structure, heterodimer of a heavy and a light chain. Interacts with microtubules and actin. Both MAP1S heavy and light chains interact with microtubules. MAP1S light chain interacts with actin. Interacts with ESR1, LRPPRC, RASSF1, microtubules and VCY2. Interacts with WDR47 (via N-terminus of light chain). Interacts (via C-terminus) with GAN (via Kelch domains). In terms of tissue distribution, expressed in ventral and dorsal horns of the spinal cord, hippocampus, cerebral cortex, molecular, Purkinje and granular cell layers of the cerebellum and in dorsal root ganglia of the PNS (at protein level). Expressed in brain, testis, heart, lung, kidney and liver.

The protein localises to the nucleus. It is found in the cytoplasm. It localises to the cytosol. The protein resides in the cytoskeleton. Its subcellular location is the spindle. In terms of biological role, microtubule-associated protein that mediates aggregation of mitochondria resulting in cell death and genomic destruction (MAGD). Plays a role in anchoring the microtubule organizing center to the centrosomes. Binds to DNA. Plays a role in apoptosis. Involved in the formation of microtubule bundles. In Mus musculus (Mouse), this protein is Microtubule-associated protein 1S (Map1s).